We begin with the raw amino-acid sequence, 344 residues long: Meiotic recombination protein DMC1 homolog B (344 aa).

133-140 (GEFRSGKT) is a binding site for ATP. A dsDNA-binding site is contributed by arginine 235. The ssDNA site is built by arginine 235, phenylalanine 238, arginine 241, arginine 247, and arginine 315. The dsDNA site is built by arginine 241 and arginine 247.

The protein belongs to the RecA family. DMC1 subfamily. In terms of tissue distribution, highly expressed in spikelets. Expressed in meiotic young panicles.

It localises to the nucleus. In terms of biological role, recombinase that may participate in meiotic recombination, specifically in homologous strand assimilation, which is required for the resolution of meiotic double-strand breaks. Exhibits DNA-dependent ATPase activity when bound to single-stranded DNA (ssDNA). Mediates renaturation of homologous complementary strands as well as assimilation of single strands into homologous supercoiled duplexes leading to D-loop formation. Binds circular single-stranded DNA (ssDNA) and circular double-stranded DNA (dsDNA) in vitro. Catalyzes DNA homologous renaturation and DNA strand exchange. The rates of these activities are dependent on the state of ATP hydrolysis. Forms helical filaments along ssDNA and dsDNA, and promotes strand exchange between ssDNA and dsDNA with long DNA substrates of several thousand base pairs. The presence of the replication protein A is not required for this activity. Seems to be required for homologous pairing and subsequent chromosome segregation during male meiosis. May be not directly required for homologous pairing during male meiosis. Required for synaptonemal complex assembly and crossover formation. Functions redundantly with DMC1A. This Oryza sativa subsp. japonica (Rice) protein is Meiotic recombination protein DMC1 homolog B.